A 609-amino-acid chain; its full sequence is MTSATIPGLDTAPTNHQGLLSWVQEVAELTQPDRVVFADGSDEEFHRLSAQLVDAGTFTRLNDEKFPNSYLALSDPSDVARVESRTFICSEREIDAGPTNNWMDPSEMRTLMTDLYRGCMRGRTMYVVPFCMGPLGAEDPKLGVEITDSEYVVVSMKVMTRMGTAALEKMGQDGFFVKALHSVGAPLEDGQADVPWPCSDTKYITHFPETREIWSYGSGYGGNALLGKKCYSLRIASAMARDEGWLAEHMLILKLISPENKAYYIAAAFPSACGKTNLAMLQPTIPGWRAETLGDDIAWMRFGKDGRLYAVNPEFGFFGVAPGTNWKSNPNAMRTIAAGNTVFTNVALTDDGEVWWEGLEGDPQHLVDWKGNEWYFRETETTAAHPNSRYCTPMSQCPILAPEWDDPQGVPISAILFGGRRKTTVPLVTQARDWQHGVFIGATLGSEQTAAAEGKVGNVRRDPMAMLPFMGYNVGDYVQHWIDIGKNSDESKLPQVFFVNWFRRGEDHRFLWPGFGENSRVMKWIVDRIEHKAGGKTTPIGTVPTVEDLDLEGLDANPADVSEALAVNAQEWREELPLIEEWLQFIGEKLPTGIKDEFDALKERLRDAE.

Substrate contacts are provided by residues R81 and 220–222; that span reads YGG. Positions 229 and 249 each coordinate Mn(2+). S271 lines the substrate pocket. A GTP-binding site is contributed by 272-277; sequence ACGKTN. C273 is a catalytic residue. D296 lines the Mn(2+) pocket. Position 387–389 (387–389) interacts with substrate; sequence NSR. Residues R389, R420, and 515–518 each bind GTP; that span reads FGEN.

The protein belongs to the phosphoenolpyruvate carboxykinase [GTP] family. As to quaternary structure, monomer. Requires Mn(2+) as cofactor.

The protein resides in the cytoplasm. The enzyme catalyses oxaloacetate + GTP = phosphoenolpyruvate + GDP + CO2. It participates in carbohydrate biosynthesis; gluconeogenesis. Its function is as follows. Catalyzes the conversion of oxaloacetate (OAA) to phosphoenolpyruvate (PEP), the rate-limiting step in the metabolic pathway that produces glucose from lactate and other precursors derived from the citric acid cycle. This chain is Phosphoenolpyruvate carboxykinase [GTP], found in Mycobacterium marinum (strain ATCC BAA-535 / M).